The primary structure comprises 1113 residues: uncharacterized protein (1113 aa).

An ATP-binding site is contributed by 313–320 (GPPGTGKS).

The protein belongs to the DNA2/NAM7 helicase family.

This is an uncharacterized protein from Mycoplasma genitalium (strain ATCC 33530 / DSM 19775 / NCTC 10195 / G37) (Mycoplasmoides genitalium).